The following is a 601-amino-acid chain: Kelch-like ECH-associated protein 1A (601 aa).

A BTB domain is found at 44-117 (MDELRHHEML…VISRLIDFAY (74 aa)). In terms of domain architecture, BACK spans 153–253 (KNLEPSNVIG…LNAVHIYALP (101 aa)). Kelch repeat units follow at residues 292-337 (PTPH…PCSG), 338-388 (LGAC…PRNR), 389-435 (VGVG…ARLG), 436-482 (AGVA…VRSG), 484-529 (GVVC…CRSA), and 530-576 (HGVS…GRSG).

The protein belongs to the KEAP1 family. Homodimer and heterodimer; heterodimerizes with keap1b. Component of the BCR(KEAP1) E3 ubiquitin ligase complex, at least composed of 2 molecules of cul3, 2 molecules of keap1 (keap1a and/or keap1b), and rbx1. Interacts with nfe2l2/nrf2; the interaction is direct. Post-translationally, non-enzymatic covalent modifications of reactive cysteines by electrophile metabolites inactivate the BCR(KEAP1) complex. Widely expressed.

It localises to the cytoplasm. The protein localises to the nucleus. It functions in the pathway protein modification; protein ubiquitination. With respect to regulation, ubiquitin ligase activity of the BCR(KEAP1) complex is inhibited by oxidative stress and electrophile metabolites such as sulforaphane. Electrophile metabolites react with reactive cysteine residues in keap1 and trigger non-enzymatic covalent modifications of these cysteine residues, leading to inactivate the ubiquitin ligase activity of the BCR(KEAP1) complex. Functionally, substrate-specific adapter of a BCR (BTB-CUL3-RBX1) E3 ubiquitin ligase complex that regulates the response to oxidative stress by targeting nfe2l2/nrf2 for ubiquitination. Keap1 acts as a key sensor of oxidative and electrophilic stress: in normal conditions, the BCR(KEAP1) complex mediates ubiquitination and degradation of nfe2l2/nrf2, a transcription factor regulating expression of many cytoprotective genes. In response to oxidative stress, different electrophile metabolites trigger non-enzymatic covalent modifications of highly reactive cysteine residues in KEAP1, leading to inactivate the ubiquitin ligase activity of the BCR(KEAP1) complex, promoting nfe2l2/nrf2 nuclear accumulation and expression of phase II detoxifying enzymes. This Danio rerio (Zebrafish) protein is Kelch-like ECH-associated protein 1A.